Consider the following 71-residue polypeptide: Dermonecrotic toxin LgSicTox-alphaI-Loxn-A (71 aa).

The active site involves His-12. Positions 32, 34, and 48 each coordinate Mg(2+).

Requires Mg(2+) as cofactor. Contains 2 disulfide bonds. As to expression, expressed by the venom gland.

Its subcellular location is the secreted. The enzyme catalyses an N-(acyl)-sphingosylphosphocholine = an N-(acyl)-sphingosyl-1,3-cyclic phosphate + choline. The catalysed reaction is an N-(acyl)-sphingosylphosphoethanolamine = an N-(acyl)-sphingosyl-1,3-cyclic phosphate + ethanolamine. It catalyses the reaction a 1-acyl-sn-glycero-3-phosphocholine = a 1-acyl-sn-glycero-2,3-cyclic phosphate + choline. It carries out the reaction a 1-acyl-sn-glycero-3-phosphoethanolamine = a 1-acyl-sn-glycero-2,3-cyclic phosphate + ethanolamine. In terms of biological role, catalyzes the hydrolysis of sphingomyelin. May also act on other phosphatidyl esters. Dermonecrotic toxins cleave the phosphodiester linkage between the phosphate and headgroup of certain phospholipids (sphingolipid and lysolipid substrates), forming an alcohol (often choline) and a cyclic phosphate. This toxin acts on sphingomyelin (SM). It may also act on ceramide phosphoethanolamine (CPE), lysophosphatidylcholine (LPC) and lysophosphatidylethanolamine (LPE), but not on lysophosphatidylserine (LPS), and lysophosphatidylglycerol (LPG). It acts by transphosphatidylation, releasing exclusively cyclic phosphate products as second products. In vivo, induces dermonecrosis, but is not lethal. Induces hemolysis, vascular permeability, edema, inflammatory response, and platelet aggregation. This Loxosceles gaucho (Spider) protein is Dermonecrotic toxin LgSicTox-alphaI-Loxn-A.